Here is a 212-residue protein sequence, read N- to C-terminus: MEENNGNNNHYLPQPSSSQLPPPPLYYQSMPLPSYSLPLPYSPQMRNYWIAQMGNATDVKHHAFPLTRIKKIMKSNPEVNMVTAEAPVLISKACEMLILDLTMRSWLHTVEGGRQTLKRSDTLTRSDISAATTRSFKFTFLGDVVPRDPSVVTDDPVLHPDGEVLPPGTVIGYPVFDCNGVYASPPQMQEWPAVPGDGEEAAGEIGGSSGGN.

The span at 1–10 (MEENNGNNNH) shows a compositional bias: polar residues. 2 disordered regions span residues 1–23 (MEEN…LPPP) and 190–212 (EWPA…SGGN).

This sequence belongs to the NFYC/HAP5 subunit family. Heterotrimeric transcription factor composed of three components, NF-YA, NF-YB and NF-YC. NF-YB and NF-YC must interact and dimerize for NF-YA association and DNA binding. As to expression, expressed in flowers.

The protein localises to the nucleus. Stimulates the transcription of various genes by recognizing and binding to a CCAAT motif in promoters. The sequence is that of Nuclear transcription factor Y subunit C-7 (NFYC7) from Arabidopsis thaliana (Mouse-ear cress).